Here is a 149-residue protein sequence, read N- to C-terminus: Transcription antitermination protein NusB (149 aa).

The protein belongs to the NusB family.

In terms of biological role, involved in transcription antitermination. Required for transcription of ribosomal RNA (rRNA) genes. Binds specifically to the boxA antiterminator sequence of the ribosomal RNA (rrn) operons. The polypeptide is Transcription antitermination protein NusB (Acinetobacter baylyi (strain ATCC 33305 / BD413 / ADP1)).